The chain runs to 99 residues: Leydig cell tumor 10 kDa protein homolog (99 aa).

The tract at residues 1-36 (MAQGQRKFQAHKPAKSKTAAAASEKNRGPRKGGRVI) is disordered.

The protein belongs to the UPF0390 family.

Functionally, may have a potential role in hypercalcemia of malignancy. This is Leydig cell tumor 10 kDa protein homolog (C19orf53) from Homo sapiens (Human).